Here is a 149-residue protein sequence, read N- to C-terminus: SsrA-binding protein (149 aa).

It belongs to the SmpB family.

The protein localises to the cytoplasm. Functionally, required for rescue of stalled ribosomes mediated by trans-translation. Binds to transfer-messenger RNA (tmRNA), required for stable association of tmRNA with ribosomes. tmRNA and SmpB together mimic tRNA shape, replacing the anticodon stem-loop with SmpB. tmRNA is encoded by the ssrA gene; the 2 termini fold to resemble tRNA(Ala) and it encodes a 'tag peptide', a short internal open reading frame. During trans-translation Ala-aminoacylated tmRNA acts like a tRNA, entering the A-site of stalled ribosomes, displacing the stalled mRNA. The ribosome then switches to translate the ORF on the tmRNA; the nascent peptide is terminated with the 'tag peptide' encoded by the tmRNA and targeted for degradation. The ribosome is freed to recommence translation, which seems to be the essential function of trans-translation. The protein is SsrA-binding protein of Thermosipho africanus (strain TCF52B).